The chain runs to 261 residues: Enolase-phosphatase E1 (261 aa).

Mg(2+)-binding residues include Asp-16 and Glu-18. Substrate is bound by residues 153-154 and Lys-187; that span reads SS. Residue Asp-212 participates in Mg(2+) binding.

Belongs to the HAD-like hydrolase superfamily. MasA/MtnC family. Monomer. Requires Mg(2+) as cofactor.

It is found in the cytoplasm. The protein localises to the nucleus. It carries out the reaction 5-methylsulfanyl-2,3-dioxopentyl phosphate + H2O = 1,2-dihydroxy-5-(methylsulfanyl)pent-1-en-3-one + phosphate. It participates in amino-acid biosynthesis; L-methionine biosynthesis via salvage pathway; L-methionine from S-methyl-5-thio-alpha-D-ribose 1-phosphate: step 3/6. The protein operates within amino-acid biosynthesis; L-methionine biosynthesis via salvage pathway; L-methionine from S-methyl-5-thio-alpha-D-ribose 1-phosphate: step 4/6. Its function is as follows. Bifunctional enzyme that catalyzes the enolization of 2,3-diketo-5-methylthiopentyl-1-phosphate (DK-MTP-1-P) into the intermediate 2-hydroxy-3-keto-5-methylthiopentenyl-1-phosphate (HK-MTPenyl-1-P), which is then dephosphorylated to form the acireductone 1,2-dihydroxy-3-keto-5-methylthiopentene (DHK-MTPene). The protein is Enolase-phosphatase E1 (enoph1) of Danio rerio (Zebrafish).